A 601-amino-acid chain; its full sequence is HIRA-interacting protein 3 (601 aa).

Disordered regions lie at residues 60–469 (KMQA…EDHP) and 546–601 (STGR…GDSS). Residues 66-76 (GTREGKPDFIK) are compositionally biased toward basic and acidic residues. Ser85, Ser96, and Ser98 each carry phosphoserine. Residues 97–113 (ESESSSSPSSPDGSGPS) show a composition bias toward low complexity. Over residues 117-129 (RTTKKTCLRRALK) the composition is skewed to basic residues. Over residues 130 to 149 (KAVESTDEDHQTDLDAKMGL) the composition is skewed to basic and acidic residues. Position 134 is a phosphoserine (Ser134). Thr135 and Thr141 each carry phosphothreonine. Phosphoserine occurs at positions 152, 153, and 163. Thr167 is modified (phosphothreonine). The span at 186-205 (GAKDKQVPLKADRKQVREES) shows a compositional bias: basic and acidic residues. 11 positions are modified to phosphoserine: Ser205, Ser207, Ser208, Ser231, Ser234, Ser238, Ser313, Ser359, Ser360, Ser384, and Ser389. Composition is skewed to basic and acidic residues over residues 238-264 (SPAK…ERKS) and 313-324 (SSEKGEAEKEEG). Residues 347 to 378 (RTQTESGRRQNTSSRDDSNSTQEQAAAQGTTK) are compositionally biased toward polar residues. The segment covering 379 to 388 (SGSLGSSNGD) has biased composition (low complexity). Residue Thr391 is modified to Phosphothreonine. 2 positions are modified to phosphoserine: Ser396 and Ser398. A compositionally biased stretch (low complexity) spans 413 to 432 (SNKSSKNGQARSCSSSSDSS). Residues 429–572 (SDSSPEPTGQ…TSPGETYRRT (144 aa)) form an interaction with the histone H2A-H2B complex region. Over residues 556–566 (WNPSGEGTSPG) the composition is skewed to polar residues. Residues Ser564, Ser575, Ser595, Ser596, and Ser600 each carry the phosphoserine modification. Residues 568-580 (TYRRTLDSEEEQP) show a composition bias toward basic and acidic residues.

In terms of assembly, interacts (via C-terminus) with histone H2A-H2B dimers; the interaction is direct. Interacts with HIRA. Interacts with CK2. Post-translationally, phosphorylated by CK2.

It is found in the nucleus. In terms of biological role, histone chaperone that carries a H2A-H2B histone complex and facilitates its deposition onto chromatin. This is HIRA-interacting protein 3 from Mus musculus (Mouse).